We begin with the raw amino-acid sequence, 104 residues long: MQTSRISSFFRGLVHLYRWAISPFLGAPCRFFPTCSEYALVALKKHPLRKSLFLIAKRLLKCGPWCIGGIDLVPRTSVEEYLSSPTPLAESPDDRTVPHTQETS.

The tract at residues 83–104 is disordered; it reads SSPTPLAESPDDRTVPHTQETS.

It belongs to the UPF0161 family.

Its subcellular location is the cell inner membrane. Its function is as follows. Could be involved in insertion of integral membrane proteins into the membrane. The protein is Putative membrane protein insertion efficiency factor of Chlamydia trachomatis serovar D (strain ATCC VR-885 / DSM 19411 / UW-3/Cx).